An 84-amino-acid chain; its full sequence is MGIIAWIIFDLIAGIIAKLIMPGRDGGGFFLTCILGIVGAVVGGWLATMFGIGGSISGFNLHSFLVAVVGAILVLGIFRLLRRE.

3 helical membrane-spanning segments follow: residues 1–21 (MGII…KLIM), 27–47 (GGFF…GWLA), and 58–78 (GFNL…LGIF).

Belongs to the UPF0410 family.

The protein resides in the cell inner membrane. The sequence is that of UPF0410 protein YmgE (ymgE) from Escherichia coli (strain K12).